Here is a 1062-residue protein sequence, read N- to C-terminus: Histone H3-lysine(4) N-trimethyltransferase ATX1 (1062 aa).

Residues 159–184 (NAFSGNKQNGSSRRKGSSSKNQDKAT) form a disordered region. Residues 301–365 (PGDIVWAKLA…VKQAISFIKG (65 aa)) enclose the PWWP domain. Positions 401 to 424 (QLQKGADSVDSDMANSTEEGNSGG) are disordered. The region spanning 441–500 (DFRHIIGDLLIINLGKVVTDSQFFKDENHIWPEGYTAMRKFTSLTDHSASALYKMEVLRD) is the FYR N-terminal domain. The 83-residue stretch at 504 to 586 (KTHPLFIVTA…RPSSHVSMCK (83 aa)) folds into the FYR C-terminal domain. The Phorbol-ester/DAG-type zinc finger occupies 591-647 (RHQNQPTGYRPVRVDWKDLDKCNVCHMDEEYENNLFLQCDKCRMMVHAKCYGELEPC). Residues 599-1062 (YRPVRVDWKD…RCDLIDWTAE (464 aa)) are interaction with PIP5. The segment at 609 to 660 (LDKCNVCHMDEEYENNLFLQCDKCRMMVHAKCYGELEPCDGALWLCNLCRPG) adopts a PHD-type 1 zinc-finger fold. The C2HC pre-PHD-type zinc finger occupies 665–698 (PPRCCLCPVVGGAMKPTTDGRWAHLACAIWIPET). Residues 722–785 (LMCTICGVSY…RMLSFCKRHR (64 aa)) form a PHD-type 2 zinc finger. The SET domain occupies 898 to 1016 (KRLAFGKSGI…KWEELTYDYR (119 aa)). His908 provides a ligand contact to S-adenosyl-L-methionine. An O-linked (GlcNAc) serine glycan is attached at Ser947. S-adenosyl-L-methionine contacts are provided by residues Tyr954 and 977–978 (NH). Residues Cys980, Cys1026, Cys1028, and Cys1033 each contribute to the Zn(2+) site. In terms of domain architecture, Post-SET spans 1022–1038 (ERLSCSCGFPGCRGVVN).

It belongs to the class V-like SAM-binding methyltransferase superfamily. Histone-lysine methyltransferase family. TRX/MLL subfamily. Interacts with PIP5. Interacts with WDR5A. Binds to CLF in the nucleus. Interacts with NRPB1 CTD domain, especially when NRPB1 is phosphorylated on 'Ser-5' of the heptapeptide repeat. Component of a nuclear protein complex containing at least TATA binding proteins (TBPs, e.g. TBP1 and TBP2) and ATX1. Associates with ULT1 for trimethylating 'Lys-4' on histone H3 (H3K4me3) at flower MADS box gene loci. Interacts with SEC. As to quaternary structure, interacts with A4/EF1A in the cytoplasm on the nuclear periphery. Post-translationally, activated via O-glycosylation by SEC; this modification triggers FLC locus H3K4me3 histone modification, thus preventing premature flowering. Strongly expressed in cotyledons, but weak levels in the first true leaves, except at the hydothodes. Ubiquitous with higher levels in dividing tissues, including inflorescence meristem and flower primordia. Expressed also in leaves (especially at hydathodes), in growing inflorescence stems and in the mature flowers. In terms of tissue distribution, strongly expressed in young seedlings.

It is found in the nucleus. It localises to the cytoplasm. Its subcellular location is the perinuclear region. It catalyses the reaction L-lysyl(4)-[histone H3] + 3 S-adenosyl-L-methionine = N(6),N(6),N(6)-trimethyl-L-lysyl(4)-[histone H3] + 3 S-adenosyl-L-homocysteine + 3 H(+). The catalysed reaction is L-lysyl-[protein] + 3 S-adenosyl-L-methionine = N(6),N(6),N(6)-trimethyl-L-lysyl-[protein] + 3 S-adenosyl-L-homocysteine + 3 H(+). Its function is as follows. Binds to the promoter and regulates the transcription of target genes, maintaining them in an active state; at promoters, required for TATA binding proteins (TBPs, e.g. TBP1 and TBP2) and RNA polymerase II (Pol II) recruitment, and, in a subsequent event, is recruited by a phosphorylated form of Pol II to the +300-bp region of transcribed sequences to trimethylates nucleosomes. Histone trimethyltransferase that trimethylates 'Lys-4' of histone H3 (H3K4me3); H3 'Lys-4' methylation represents a specific tag for epigenetic transcriptional activation and is required for efficient elongation of transcription but not for transcription initiation. Methylates only a limited fraction of nucleosomes of target genes (e.g. FLC, NAP, XTH33 and WRKY70). Necessary for WDR5A occupancy at WRKY70 and LTP7 genes. Required to maintain the active state of class A (AP1 and AP2), class B (PI and AP3) and class C (AG, AGAMOUS) floral homeotic genes at early stages of flower development. Together with CLF, modulates AG nucleosome methylation statement. Involved in epigenetic regulation (e.g. H3K4me3) of the floral repressors FLC, FT and SOC1 to prevent the transition from vegetative to reproductive development, independently of the photoperiod; binds the active FLC locus before flowering, but this interaction is released upon the transition to flowering. Regulates floral organ identity and flowering transition. Functions as a receptor for the lipid messenger phosphatidylinositol 5-phosphate (PI5P), which negatively regulates its transcriptional activation activity. Exhibits histone methylase activity and subsequent transcriptional regulation on WRKY70 gene, and, to a lower extent on secondary defense-response targets salicylic acid (SA)-responsive gene PR1 and jasmonic acid (JA)-responsive gene THI2.1. Involved in response to dehydration stress-response in both abscisic acid (ABA)-dependent and ABA-independent pathways; this includes specific genes (e.g. COR15A, ADH1, CBF4, RD29A, RD29B, RD26, ABF3, NCED3 and ABA3) epigenetic regulation (e.g. H3K4me3 and Pol II recruitment) to promote their transcription and influence ABA production. Implicated in stomatal closure regulation. Indirect repressor of XTH genes (XTH33). Necessary for the phosphorylation of Pol II NRPB1 (e.g. Ser5P and Ser2P) at the promoters of target genes, thus regulating both early and late stages of transcription. Controls root growth and architecture by regulating the timing of root development, stem cell niche maintenance (e.g. quiescent center (QC)), and cell patterning during primary and lateral root development. Modulates cell cycle duration, cell production, and the transition from cell proliferation in the root apical meristem (RAM) to cell elongation. Trimethylates A4/EF1A post-translationally at Lys-396. Required for actin cytoskeleton organization. The chain is Histone H3-lysine(4) N-trimethyltransferase ATX1 from Arabidopsis thaliana (Mouse-ear cress).